We begin with the raw amino-acid sequence, 402 residues long: Putative F-box protein At1g70970 (402 aa).

In terms of domain architecture, F-box spans 4-52; that stretch reads SSSETLHVEDLQTEIMSWLPLKSLLRFVIVSKKWASIIRGEQFKALYLR.

The polypeptide is Putative F-box protein At1g70970 (Arabidopsis thaliana (Mouse-ear cress)).